Consider the following 376-residue polypeptide: Putative endoglucanase type K (376 aa).

The N-terminal stretch at 1–18 (MRSYTLLALAGPLAVSAA) is a signal peptide. The segment at 19–308 (SGSGHSTRYW…ATKPAQPVNK (290 aa)) is catalytic. Asp29 acts as the Nucleophile in catalysis. Asp140 (proton donor) is an active-site residue. Residues 229–332 (AFKGDTSASK…SCPAKTDATA (104 aa)) form a disordered region. Low complexity-rich tracts occupy residues 235 to 258 (SASK…AQPQ) and 291 to 306 (KPVA…AQPV). Positions 309–338 (PKTTQKVRGTKTRGSCPAKTDATAKASVVP) are linker. The CBM1 domain occupies 335–374 (SVVPAYYQCGGSKSAYPNGNLACATGSKCVKQNEYYSQCV).

This sequence belongs to the glycosyl hydrolase 45 (cellulase K) family.

It catalyses the reaction Endohydrolysis of (1-&gt;4)-beta-D-glucosidic linkages in cellulose, lichenin and cereal beta-D-glucans.. This is Putative endoglucanase type K from Fusarium oxysporum (Fusarium vascular wilt).